The chain runs to 188 residues: MMSTSSDAQLDPVEFIHSRIRTVPNWPQPGVMFRDITPLLQSAKAMRVLVDLFVERYVDAKLDYIAGLDARGFIIAPIVAYELSVGFVPIRKVGKLPYKTQRESYALEYGTATVEIHEDACKPGDRVVIVDDLIATGGTMMAGKNLLDRLGAVVVEGAAIVDLPDLGGSALLRGAGLSLYTVTEFAGH.

It belongs to the purine/pyrimidine phosphoribosyltransferase family. As to quaternary structure, homodimer.

The protein resides in the cytoplasm. It catalyses the reaction AMP + diphosphate = 5-phospho-alpha-D-ribose 1-diphosphate + adenine. Its pathway is purine metabolism; AMP biosynthesis via salvage pathway; AMP from adenine: step 1/1. In terms of biological role, catalyzes a salvage reaction resulting in the formation of AMP, that is energically less costly than de novo synthesis. This chain is Adenine phosphoribosyltransferase, found in Burkholderia thailandensis (strain ATCC 700388 / DSM 13276 / CCUG 48851 / CIP 106301 / E264).